A 64-amino-acid chain; its full sequence is Large ribosomal subunit protein uL30 (64 aa).

Belongs to the universal ribosomal protein uL30 family. As to quaternary structure, part of the 50S ribosomal subunit.

In Desulforudis audaxviator (strain MP104C), this protein is Large ribosomal subunit protein uL30.